A 573-amino-acid polypeptide reads, in one-letter code: Glutamate--tRNA ligase (573 aa).

Positions 107-117 (PNPDGAFHLGN) match the 'HIGH' region motif.

The protein belongs to the class-I aminoacyl-tRNA synthetase family. Glutamate--tRNA ligase type 2 subfamily.

It is found in the cytoplasm. The enzyme catalyses tRNA(Glu) + L-glutamate + ATP = L-glutamyl-tRNA(Glu) + AMP + diphosphate. In terms of biological role, catalyzes the attachment of glutamate to tRNA(Glu) in a two-step reaction: glutamate is first activated by ATP to form Glu-AMP and then transferred to the acceptor end of tRNA(Glu). The protein is Glutamate--tRNA ligase of Thermococcus kodakarensis (strain ATCC BAA-918 / JCM 12380 / KOD1) (Pyrococcus kodakaraensis (strain KOD1)).